Consider the following 312-residue polypeptide: MDIIFYHPTFDTQWWIEALRKAIPQARVRAWKSGDNDSADYALVWHPPVEMLAGRDLKAVFALGAGVDSILSKLQAHPEMLNPSVPLFRLEDTGMGEQMQEYAVSQVLHWFRRFDDYRIQQNSSHWQPLPEYHWEDFTIGILGAGVLGSKVAQSLQTWRFPLRCWSRTRKSWPGVQSFAGREELSAFLSQCRVLINLLPNTPETVGIINQQLLEKLPDGAYLLNLARGVHVVEDDLLAALDSGKVKGAMLDVFNREPLPPESPLWQHPRVTITPHVAAITRPAEAVEYISRTIAQLEKGERVCGQVDRARGY.

Arg227 is a catalytic residue. The active-site Proton donor is the His275.

The protein belongs to the D-isomer specific 2-hydroxyacid dehydrogenase family. GhrA subfamily.

It localises to the cytoplasm. It carries out the reaction glycolate + NADP(+) = glyoxylate + NADPH + H(+). It catalyses the reaction (R)-glycerate + NAD(+) = 3-hydroxypyruvate + NADH + H(+). The enzyme catalyses (R)-glycerate + NADP(+) = 3-hydroxypyruvate + NADPH + H(+). Functionally, catalyzes the NADPH-dependent reduction of glyoxylate and hydroxypyruvate into glycolate and glycerate, respectively. This is Glyoxylate/hydroxypyruvate reductase A from Shigella boydii serotype 18 (strain CDC 3083-94 / BS512).